The following is a 574-amino-acid chain: Proline--tRNA ligase (574 aa).

This sequence belongs to the class-II aminoacyl-tRNA synthetase family. ProS type 1 subfamily. As to quaternary structure, homodimer.

The protein localises to the cytoplasm. It carries out the reaction tRNA(Pro) + L-proline + ATP = L-prolyl-tRNA(Pro) + AMP + diphosphate. In terms of biological role, catalyzes the attachment of proline to tRNA(Pro) in a two-step reaction: proline is first activated by ATP to form Pro-AMP and then transferred to the acceptor end of tRNA(Pro). As ProRS can inadvertently accommodate and process non-cognate amino acids such as alanine and cysteine, to avoid such errors it has two additional distinct editing activities against alanine. One activity is designated as 'pretransfer' editing and involves the tRNA(Pro)-independent hydrolysis of activated Ala-AMP. The other activity is designated 'posttransfer' editing and involves deacylation of mischarged Ala-tRNA(Pro). The misacylated Cys-tRNA(Pro) is not edited by ProRS. The sequence is that of Proline--tRNA ligase from Sodalis glossinidius (strain morsitans).